The following is a 180-amino-acid chain: Acireductone dioxygenase (180 aa).

Residues His-99, His-101, Glu-105, and His-145 each coordinate Fe(2+). 4 residues coordinate Ni(2+): His-99, His-101, Glu-105, and His-145.

Belongs to the acireductone dioxygenase (ARD) family. Monomer. It depends on Fe(2+) as a cofactor. The cofactor is Ni(2+).

The enzyme catalyses 1,2-dihydroxy-5-(methylsulfanyl)pent-1-en-3-one + O2 = 3-(methylsulfanyl)propanoate + CO + formate + 2 H(+). It carries out the reaction 1,2-dihydroxy-5-(methylsulfanyl)pent-1-en-3-one + O2 = 4-methylsulfanyl-2-oxobutanoate + formate + 2 H(+). Its pathway is amino-acid biosynthesis; L-methionine biosynthesis via salvage pathway; L-methionine from S-methyl-5-thio-alpha-D-ribose 1-phosphate: step 5/6. Catalyzes 2 different reactions between oxygen and the acireductone 1,2-dihydroxy-3-keto-5-methylthiopentene (DHK-MTPene) depending upon the metal bound in the active site. Fe-containing acireductone dioxygenase (Fe-ARD) produces formate and 2-keto-4-methylthiobutyrate (KMTB), the alpha-ketoacid precursor of methionine in the methionine recycle pathway. Ni-containing acireductone dioxygenase (Ni-ARD) produces methylthiopropionate, carbon monoxide and formate, and does not lie on the methionine recycle pathway. This Geobacillus thermodenitrificans (strain NG80-2) protein is Acireductone dioxygenase.